Here is a 93-residue protein sequence, read N- to C-terminus: Putative nuclease p44 (93 aa).

Residues Arg-5–Asp-84 enclose the VRR-NUC domain.

Requires Mg(2+) as cofactor.

Functionally, nuclease. The sequence is that of Putative nuclease p44 (44) from Escherichia coli (Bacteriophage APSE-1).